A 459-amino-acid chain; its full sequence is ATP-dependent protease ATPase subunit HslU (459 aa).

Residues Val-21, 63–68 (GVGKTE), Asp-273, Glu-338, and Arg-410 contribute to the ATP site.

The protein belongs to the ClpX chaperone family. HslU subfamily. In terms of assembly, a double ring-shaped homohexamer of HslV is capped on each side by a ring-shaped HslU homohexamer. The assembly of the HslU/HslV complex is dependent on binding of ATP.

The protein resides in the cytoplasm. Its function is as follows. ATPase subunit of a proteasome-like degradation complex; this subunit has chaperone activity. The binding of ATP and its subsequent hydrolysis by HslU are essential for unfolding of protein substrates subsequently hydrolyzed by HslV. HslU recognizes the N-terminal part of its protein substrates and unfolds these before they are guided to HslV for hydrolysis. In Thermosipho africanus (strain TCF52B), this protein is ATP-dependent protease ATPase subunit HslU.